The primary structure comprises 116 residues: Ribonuclease P protein component (116 aa).

This sequence belongs to the RnpA family. Consists of a catalytic RNA component (M1 or rnpB) and a protein subunit.

The catalysed reaction is Endonucleolytic cleavage of RNA, removing 5'-extranucleotides from tRNA precursor.. Its function is as follows. RNaseP catalyzes the removal of the 5'-leader sequence from pre-tRNA to produce the mature 5'-terminus. It can also cleave other RNA substrates such as 4.5S RNA. The protein component plays an auxiliary but essential role in vivo by binding to the 5'-leader sequence and broadening the substrate specificity of the ribozyme. The protein is Ribonuclease P protein component of Carboxydothermus hydrogenoformans (strain ATCC BAA-161 / DSM 6008 / Z-2901).